Reading from the N-terminus, the 448-residue chain is Asparagine--tRNA ligase (448 aa).

It belongs to the class-II aminoacyl-tRNA synthetase family. Homodimer.

It is found in the cytoplasm. The catalysed reaction is tRNA(Asn) + L-asparagine + ATP = L-asparaginyl-tRNA(Asn) + AMP + diphosphate + H(+). This is Asparagine--tRNA ligase from Streptococcus pyogenes serotype M12 (strain MGAS9429).